The following is a 252-amino-acid chain: 5-oxoprolinase subunit A (252 aa).

The protein belongs to the LamB/PxpA family. In terms of assembly, forms a complex composed of PxpA, PxpB and PxpC.

The catalysed reaction is 5-oxo-L-proline + ATP + 2 H2O = L-glutamate + ADP + phosphate + H(+). Functionally, catalyzes the cleavage of 5-oxoproline to form L-glutamate coupled to the hydrolysis of ATP to ADP and inorganic phosphate. This chain is 5-oxoprolinase subunit A, found in Mycobacterium ulcerans (strain Agy99).